A 233-amino-acid polypeptide reads, in one-letter code: Protein-methionine-sulfoxide reductase heme-binding subunit MsrQ (233 aa).

The next 6 membrane-spanning stretches (helical) occupy residues 13–33 (IKAA…HGLW), 44–64 (ALTR…LCVS), 81–101 (MLGL…LWLD), 117–137 (PFIT…LTSS), 151–171 (SLHR…LWLV), and 174–194 (VALL…GWRV). One can recognise a Ferric oxidoreductase domain in the interval 50–164 (GIWTLNFLFL…AVYAVAILGV (115 aa)).

Belongs to the MsrQ family. As to quaternary structure, heterodimer of a catalytic subunit (MsrP) and a heme-binding subunit (MsrQ).

Its subcellular location is the cell inner membrane. Its function is as follows. Part of the MsrPQ system that repairs oxidized periplasmic proteins containing methionine sulfoxide residues (Met-O), using respiratory chain electrons. Thus protects these proteins from oxidative-stress damage caused by reactive species of oxygen and chlorine generated by the host defense mechanisms. MsrPQ is essential for the maintenance of envelope integrity under bleach stress, rescuing a wide series of structurally unrelated periplasmic proteins from methionine oxidation. MsrQ provides electrons for reduction to the reductase catalytic subunit MsrP, using the quinone pool of the respiratory chain. Probably involved in protection against reactive chlorine species (RCS) generated by chlorite and hypochlorite. The sequence is that of Protein-methionine-sulfoxide reductase heme-binding subunit MsrQ from Azospira oryzae (strain ATCC BAA-33 / DSM 13638 / PS) (Dechlorosoma suillum).